Consider the following 477-residue polypeptide: Putative multidrug resistance protein MdtD (477 aa).

Helical transmembrane passes span 13–33 (LWIV…VNTA), 50–70 (SVIV…GWLA), 73–93 (VGVQ…SILC), 107–127 (VVQG…VMKI), 139–159 (FVTL…GFLV), 166–186 (WIFL…LLLM), 196–216 (FDIS…LALD), 220–240 (GMGL…AALA), 268–288 (LTAS…TPLF), 291–311 (VGMG…IIGS), 326–348 (GYRN…FPLV), 352–374 (GWIW…RFSA), 394–414 (LLSM…GILI), and 432–452 (AFIY…LAFA).

It belongs to the major facilitator superfamily. TCR/Tet family.

The protein localises to the cell inner membrane. This is Putative multidrug resistance protein MdtD from Serratia proteamaculans (strain 568).